Reading from the N-terminus, the 159-residue chain is Putative ribosomal RNA large subunit methyltransferase H (159 aa).

Residues leucine 76, glycine 108, and 127 to 132 (LSPLTF) each bind S-adenosyl-L-methionine.

This sequence belongs to the RNA methyltransferase RlmH family.

The protein localises to the cytoplasm. The catalysed reaction is pseudouridine(1915) in 23S rRNA + S-adenosyl-L-methionine = N(3)-methylpseudouridine(1915) in 23S rRNA + S-adenosyl-L-homocysteine + H(+). In terms of biological role, specifically methylates the pseudouridine at position 1915 (m3Psi1915) in 23S rRNA. The chain is Putative ribosomal RNA large subunit methyltransferase H from Methanoregula boonei (strain DSM 21154 / JCM 14090 / 6A8).